The following is an 87-amino-acid chain: MAKKSLNESSPVARFEQSLEELEQLVQKMEVGEMSLEQSLTAYERGIGLYRDCQQALEQAELRVRLVTDPARPEQAEAFEPPSLDGG.

The protein belongs to the XseB family. Heterooligomer composed of large and small subunits.

Its subcellular location is the cytoplasm. The enzyme catalyses Exonucleolytic cleavage in either 5'- to 3'- or 3'- to 5'-direction to yield nucleoside 5'-phosphates.. Bidirectionally degrades single-stranded DNA into large acid-insoluble oligonucleotides, which are then degraded further into small acid-soluble oligonucleotides. The sequence is that of Exodeoxyribonuclease 7 small subunit from Xanthomonas campestris pv. campestris (strain 8004).